The following is a 341-amino-acid chain: Ketol-acid reductoisomerase (NADP(+)) (341 aa).

Positions 2–182 constitute a KARI N-terminal Rossmann domain; the sequence is AKIYYNDDAD…GGTRAGVIET (181 aa). NADP(+) is bound by residues 25–28, serine 51, serine 53, and 83–86; these read YGSQ and DQVQ. The active site involves histidine 108. Glycine 134 serves as a coordination point for NADP(+). Residues 183–328 enclose the KARI C-terminal knotted domain; it reads TFTEETESDL…RKLRSLFAWE (146 aa). Mg(2+) contacts are provided by aspartate 191, glutamate 195, glutamate 227, and glutamate 231. Residue serine 252 participates in substrate binding.

It belongs to the ketol-acid reductoisomerase family. Mg(2+) is required as a cofactor.

It catalyses the reaction (2R)-2,3-dihydroxy-3-methylbutanoate + NADP(+) = (2S)-2-acetolactate + NADPH + H(+). The catalysed reaction is (2R,3R)-2,3-dihydroxy-3-methylpentanoate + NADP(+) = (S)-2-ethyl-2-hydroxy-3-oxobutanoate + NADPH + H(+). It functions in the pathway amino-acid biosynthesis; L-isoleucine biosynthesis; L-isoleucine from 2-oxobutanoate: step 2/4. The protein operates within amino-acid biosynthesis; L-valine biosynthesis; L-valine from pyruvate: step 2/4. Involved in the biosynthesis of branched-chain amino acids (BCAA). Catalyzes an alkyl-migration followed by a ketol-acid reduction of (S)-2-acetolactate (S2AL) to yield (R)-2,3-dihydroxy-isovalerate. In the isomerase reaction, S2AL is rearranged via a Mg-dependent methyl migration to produce 3-hydroxy-3-methyl-2-ketobutyrate (HMKB). In the reductase reaction, this 2-ketoacid undergoes a metal-dependent reduction by NADPH to yield (R)-2,3-dihydroxy-isovalerate. This is Ketol-acid reductoisomerase (NADP(+)) from Kocuria rhizophila (strain ATCC 9341 / DSM 348 / NBRC 103217 / DC2201).